Here is a 240-residue protein sequence, read N- to C-terminus: Citrate synthase-lysine N-methyltransferase CSKMT, mitochondrial (240 aa).

A mitochondrion-targeting transit peptide spans 1–21 (MAALRRMLHLPRLTMGTCRPF).

Belongs to the methyltransferase superfamily.

It is found in the mitochondrion. It carries out the reaction L-lysyl-[citrate synthase] + S-adenosyl-L-methionine = N(6)-methyl-L-lysyl-[citrate synthase] + S-adenosyl-L-homocysteine + H(+). The catalysed reaction is N(6)-methyl-L-lysyl-[citrate synthase] + S-adenosyl-L-methionine = N(6),N(6)-dimethyl-L-lysyl-[citrate synthase] + S-adenosyl-L-homocysteine + H(+). The enzyme catalyses N(6),N(6)-dimethyl-L-lysyl-[citrate synthase] + S-adenosyl-L-methionine = N(6),N(6),N(6)-trimethyl-L-lysyl-[citrate synthase] + S-adenosyl-L-homocysteine + H(+). With respect to regulation, citrate synthase-lysine methyltransferase activity is inhibited by S-adenosylhomocysteine (AdoHcy) and oxaloacetate (OAA). Functionally, protein-lysine methyltransferase that selectively trimethylates citrate synthase (CS) in mitochondria. Seems to conduct trimethylation in a highly distributive manner rather than in a processive manner, and thus introduces a single methyl group per binding event. The sequence is that of Citrate synthase-lysine N-methyltransferase CSKMT, mitochondrial from Pongo abelii (Sumatran orangutan).